Consider the following 637-residue polypeptide: Chaperone protein HtpG (637 aa).

An a; substrate-binding region spans residues 1–345; sequence MSHQETHGFQ…SNDLPLNVSR (345 aa). The b stretch occupies residues 346-562; that stretch reads EILQDNKVTR…EGEMSSQMIK (217 aa). Residues 563–637 are c; the sequence is LMQAAGQPVP…VNQMLLKSVG (75 aa).

Belongs to the heat shock protein 90 family. Homodimer.

It localises to the cytoplasm. Molecular chaperone. Has ATPase activity. In Shewanella amazonensis (strain ATCC BAA-1098 / SB2B), this protein is Chaperone protein HtpG.